Here is a 197-residue protein sequence, read N- to C-terminus: Guanylate kinase (197 aa).

The 186-residue stretch at 6-191 folds into the Guanylate kinase-like domain; that stretch reads SKLIILSGPS…CVAQIEKIIS (186 aa). 13 to 20 is an ATP binding site; sequence GPSGVGKG.

The protein belongs to the guanylate kinase family.

The protein resides in the cytoplasm. The enzyme catalyses GMP + ATP = GDP + ADP. Its function is as follows. Essential for recycling GMP and indirectly, cGMP. This chain is Guanylate kinase, found in Mesomycoplasma hyopneumoniae (strain 232) (Mycoplasma hyopneumoniae).